The sequence spans 471 residues: Glutamate--tRNA ligase (471 aa).

The short motif at 9-19 (PSPTGYLHVGG) is the 'HIGH' region element. Zn(2+)-binding residues include Cys-98, Cys-100, Cys-125, and His-127. The short motif at 237 to 241 (KLSKR) is the 'KMSKS' region element. ATP is bound at residue Lys-240.

The protein belongs to the class-I aminoacyl-tRNA synthetase family. Glutamate--tRNA ligase type 1 subfamily. As to quaternary structure, monomer. Zn(2+) is required as a cofactor.

The protein localises to the cytoplasm. The enzyme catalyses tRNA(Glu) + L-glutamate + ATP = L-glutamyl-tRNA(Glu) + AMP + diphosphate. Catalyzes the attachment of glutamate to tRNA(Glu) in a two-step reaction: glutamate is first activated by ATP to form Glu-AMP and then transferred to the acceptor end of tRNA(Glu). In Salmonella schwarzengrund (strain CVM19633), this protein is Glutamate--tRNA ligase.